A 373-amino-acid polypeptide reads, in one-letter code: GTP cyclohydrolase 1 type 2 homolog (373 aa).

A divalent metal cation contacts are provided by histidine 68, histidine 69, aspartate 107, histidine 333, and glutamate 336.

This sequence belongs to the GTP cyclohydrolase I type 2/NIF3 family. In terms of assembly, homohexamer.

The polypeptide is GTP cyclohydrolase 1 type 2 homolog (yqfO) (Bacillus subtilis (strain 168)).